A 518-amino-acid chain; its full sequence is GMP synthase [glutamine-hydrolyzing] (518 aa).

A Glutamine amidotransferase type-1 domain is found at 6-200 (RLLIIDFGSQ…FVRLAGFKGD (195 aa)). C84 (nucleophile) is an active-site residue. Residues H175 and E177 contribute to the active site. Residues 201 to 393 (WTMGAYREEA…LGLPESFIGR (193 aa)) enclose the GMPS ATP-PPase domain. 228-234 (SGGVDSS) lines the ATP pocket.

Homodimer.

It carries out the reaction XMP + L-glutamine + ATP + H2O = GMP + L-glutamate + AMP + diphosphate + 2 H(+). It participates in purine metabolism; GMP biosynthesis; GMP from XMP (L-Gln route): step 1/1. Its function is as follows. Catalyzes the synthesis of GMP from XMP. In Cereibacter sphaeroides (strain ATCC 17029 / ATH 2.4.9) (Rhodobacter sphaeroides), this protein is GMP synthase [glutamine-hydrolyzing].